The chain runs to 775 residues: Venom dipeptidyl peptidase 4 (775 aa).

Positions 1 to 23 are cleaved as a signal peptide; that stretch reads MEVLVQLALLLVVHGSLVVLVAG. Residues Asn68 and Asn239 are each glycosylated (N-linked (GlcNAc...) asparagine). Cystine bridges form between Cys450–Cys453 and Cys463–Cys481. 4 N-linked (GlcNAc...) asparagine glycosylation sites follow: Asn473, Asn505, Asn578, and Asn631. Ser639 acts as the Charge relay system in catalysis. Residues Cys659 and Cys770 are joined by a disulfide bond. Asn689 and Asn694 each carry an N-linked (GlcNAc...) asparagine glycan. Active-site charge relay system residues include Asp718 and His750.

This sequence belongs to the peptidase S9B family. DPPIV subfamily. In terms of tissue distribution, expressed by the venom duct.

It is found in the secreted. It carries out the reaction Release of an N-terminal dipeptide, Xaa-Yaa-|-Zaa-, from a polypeptide, preferentially when Yaa is Pro, provided Zaa is neither Pro nor hydroxyproline.. Inhibited by diprotin A. Functionally, venom dipeptidyl-peptidase which removes N-terminal dipeptides sequentially from polypeptides having unsubstituted N-termini provided that the penultimate residue is proline. May process promelittin into its active form and/or modulate the chemotactic activity of immune cells after the insect sting. This chain is Venom dipeptidyl peptidase 4, found in Apis mellifera (Honeybee).